A 291-amino-acid polypeptide reads, in one-letter code: MEKDVPLLVASAPSLMAQAKEMMEGYTLKARKGLGQHFLISQGVLNKILAAADLKPTDTVIEVGPGLGALTEELLKRAGQVIAVELDDKLIDALTEKFKGYPNFRLIHSDILKTSPEEILGQDVPYKLVANLPYYITSAVLRQFLEAKLKPESMVVMVQKEVAKNIVAKTGDMGLLTLSVRFYGNPSLVSVVPGGAFYPPPEVDSAIVKIVIPQTTIMEGVSEVDFFKLARAGFGTRRKTLLNALAQGLGISKPVILSLLNGAGIDPARRAETLSMEEWKKLCLEYAGNPC.

His37, Leu39, Gly64, Glu85, Asp110, and Asn131 together coordinate S-adenosyl-L-methionine.

It belongs to the class I-like SAM-binding methyltransferase superfamily. rRNA adenine N(6)-methyltransferase family. RsmA subfamily.

The protein resides in the cytoplasm. The enzyme catalyses adenosine(1518)/adenosine(1519) in 16S rRNA + 4 S-adenosyl-L-methionine = N(6)-dimethyladenosine(1518)/N(6)-dimethyladenosine(1519) in 16S rRNA + 4 S-adenosyl-L-homocysteine + 4 H(+). Functionally, specifically dimethylates two adjacent adenosines (A1518 and A1519) in the loop of a conserved hairpin near the 3'-end of 16S rRNA in the 30S particle. May play a critical role in biogenesis of 30S subunits. The polypeptide is Ribosomal RNA small subunit methyltransferase A (Dehalococcoides mccartyi (strain CBDB1)).